A 725-amino-acid polypeptide reads, in one-letter code: Catalase-peroxidase (725 aa).

Polar residues-rich tracts occupy residues 1-12 (MSTSNDPSNNAS) and 23-32 (PKQSAGSGTA). Positions 1–20 (MSTSNDPSNNASAGKCPFHA) are cleaved as a signal peptide. A disordered region spans residues 1-35 (MSTSNDPSNNASAGKCPFHAETPKQSAGSGTANRD). The tryptophyl-tyrosyl-methioninium (Trp-Tyr) (with M-252) cross-link spans 105 to 226 (WHGAGTYRTV…IGATEMGLIY (122 aa)). His-106 serves as the catalytic Proton acceptor. Positions 226–252 (YVNPEGPNASGEPLSAAAAIRATFGNM) form a cross-link, tryptophyl-tyrosyl-methioninium (Tyr-Met) (with W-105). His-267 contributes to the heme b binding site.

This sequence belongs to the peroxidase family. Peroxidase/catalase subfamily. As to quaternary structure, homodimer or homotetramer. Heme b is required as a cofactor. In terms of processing, formation of the three residue Trp-Tyr-Met cross-link is important for the catalase, but not the peroxidase activity of the enzyme.

It carries out the reaction H2O2 + AH2 = A + 2 H2O. The enzyme catalyses 2 H2O2 = O2 + 2 H2O. Functionally, bifunctional enzyme with both catalase and broad-spectrum peroxidase activity. The sequence is that of Catalase-peroxidase from Klebsiella pneumoniae subsp. pneumoniae (strain ATCC 700721 / MGH 78578).